Reading from the N-terminus, the 698-residue chain is Polyribonucleotide nucleotidyltransferase (698 aa).

Mg(2+) is bound by residues aspartate 487 and aspartate 493. Residues 555–614 (PKIIQIQIDPQKIGDVVGQRGKTINAIIEQTGVKIDINDEGAVSVCGTDKDMMDKAINMI) enclose the KH domain. Residues 624-692 (GQVFEGKVIS…KMGRISFSIK (69 aa)) form the S1 motif domain.

It belongs to the polyribonucleotide nucleotidyltransferase family. It depends on Mg(2+) as a cofactor.

Its subcellular location is the cytoplasm. The catalysed reaction is RNA(n+1) + phosphate = RNA(n) + a ribonucleoside 5'-diphosphate. In terms of biological role, involved in mRNA degradation. Catalyzes the phosphorolysis of single-stranded polyribonucleotides processively in the 3'- to 5'-direction. The polypeptide is Polyribonucleotide nucleotidyltransferase (Lachnoclostridium phytofermentans (strain ATCC 700394 / DSM 18823 / ISDg) (Clostridium phytofermentans)).